We begin with the raw amino-acid sequence, 269 residues long: Diaminopimelate epimerase (269 aa).

Substrate is bound by residues Asn15 and Asn66. Cys75 functions as the Proton donor in the catalytic mechanism. Residues 76–77 (GN), Asn152, Asn185, and 203–204 (ER) each bind substrate. The Proton acceptor role is filled by Cys212. 213 to 214 (GT) contacts substrate.

The protein belongs to the diaminopimelate epimerase family. Homodimer.

The protein localises to the cytoplasm. The catalysed reaction is (2S,6S)-2,6-diaminopimelate = meso-2,6-diaminopimelate. It functions in the pathway amino-acid biosynthesis; L-lysine biosynthesis via DAP pathway; DL-2,6-diaminopimelate from LL-2,6-diaminopimelate: step 1/1. Catalyzes the stereoinversion of LL-2,6-diaminopimelate (L,L-DAP) to meso-diaminopimelate (meso-DAP), a precursor of L-lysine and an essential component of the bacterial peptidoglycan. The polypeptide is Diaminopimelate epimerase (Parabacteroides distasonis (strain ATCC 8503 / DSM 20701 / CIP 104284 / JCM 5825 / NCTC 11152)).